A 127-amino-acid chain; its full sequence is DNA-directed RNA polymerases I, II, and III subunit RPABC2 (127 aa).

Acidic residues predominate over residues methionine 1–glutamate 34. Residues methionine 1–threonine 53 form a disordered region. Serine 2 is modified (N-acetylserine). Serine 2 is subject to Phosphoserine; by CK2.

The protein belongs to the archaeal Rpo6/eukaryotic RPB6 RNA polymerase subunit family. In terms of assembly, component of the RNA polymerase I (Pol I), RNA polymerase II (Pol II) and RNA polymerase III (Pol III) complexes consisting of at least 13, 12 and 17 subunits, respectively. Pol I complex consists of a ten-subunit catalytic core composed of POLR1A/RPA1, POLR1B/RPA2, POLR1C/RPAC1, POLR1D/RPAC2, POLR1H/RPA12, POLR2E/RPABC1, POLR2F/RPABC2, POLR2H/RPABC3, POLR2K/RPABC4 and POLR2L/RPABC5; a mobile stalk subunit POLR1F/RPA43 protruding from the core and additional subunits homologous to general transcription factors POLR1E/RPA49 and POLR1G/RPA34. Part of Pol I pre-initiation complex (PIC), in which Pol I core assembles with RRN3 and promoter-bound UTBF and SL1/TIF-IB complex. Pol II complex contains a ten-subunit catalytic core composed of POLR2A/RPB1, POLR2B/RPB2, POLR2C/RPB3, POLR2I/RPB9, POLR2J/RPB11, POLR2E/RPABC1, POLR2F/RPABC2, POLR2H/RPABC3, POLR2K/RPABC4 and POLR2L/RPABC5 and a mobile stalk composed of two subunits POLR2D/RPB4 and POLR2G/RPB7. Part of Pol II(G) complex, in which Pol II core associates with an additional subunit POLR2M; unlike conventional Pol II, Pol II(G) functions as a transcriptional repressor. Part of TBP-based Pol II pre-initiation complex (PIC), in which Pol II core assembles with general transcription factors and other specific initiation factors including GTF2E1, GTF2E2, GTF2F1, GTF2F2, TCEA1, ERCC2, ERCC3, GTF2H2, GTF2H3, GTF2H4, GTF2H5, GTF2A1, GTF2A2, GTF2B and TBP; this large multi-subunit PIC complex mediates DNA unwinding and targets Pol II core to the transcription start site where the first phosphodiester bond forms. Pol III complex consists of a ten-subunit catalytic core composed of POLR3A/RPC1, POLR3B/RPC2, POLR1C/RPAC1, POLR1D/RPAC2, POLR3K/RPC10, POLR2E/RPABC1, POLR2F/RPABC2, POLR2H/RPABC3, POLR2K/RPABC4 and POLR2L/RPABC5; a mobile stalk composed of two subunits POLR3H/RPC8 and CRCP/RPC9, protruding from the core and functioning primarily in transcription initiation; and additional subunits homologous to general transcription factors of the RNA polymerase II machinery, POLR3C/RPC3-POLR3F/RPC6-POLR3G/RPC7 heterotrimer required for transcription initiation and POLR3D/RPC4-POLR3E/RPC5 heterodimer involved in both transcription initiation and termination.

The protein localises to the nucleus. Its subcellular location is the nucleolus. Its function is as follows. DNA-dependent RNA polymerase catalyzes the transcription of DNA into RNA using the four ribonucleoside triphosphates as substrates. Common component of RNA polymerases I, II, and III which synthesize ribosomal RNA precursors, mRNA precursors and many functional non-coding RNAs, and small RNAs, such as 5S rRNA and tRNAs, respectively. Pol II is the central component of the basal RNA polymerase II transcription machinery. Pols are composed of mobile elements that move relative to each other. In Pol II, POLR2F/RPABC2 is part of the clamp element and together with parts of POLR2A/RPB1 and POLR2B/RPB2 forms a pocket to which the POLR2D/RPB4-POLR2G/RPB7 subcomplex binds. In Homo sapiens (Human), this protein is DNA-directed RNA polymerases I, II, and III subunit RPABC2.